The sequence spans 305 residues: Urease accessory protein UreD (305 aa).

This sequence belongs to the UreD family. In terms of assembly, ureD, UreF and UreG form a complex that acts as a GTP-hydrolysis-dependent molecular chaperone, activating the urease apoprotein by helping to assemble the nickel containing metallocenter of UreC. The UreE protein probably delivers the nickel.

Its subcellular location is the cytoplasm. Required for maturation of urease via the functional incorporation of the urease nickel metallocenter. The polypeptide is Urease accessory protein UreD (Delftia acidovorans (strain DSM 14801 / SPH-1)).